A 69-amino-acid chain; its full sequence is Conotoxin Eb6.20 (69 aa).

The signal sequence occupies residues 1-17; it reads VLIIAVLFLTACQLTTA. Positions 18 to 41 are excised as a propeptide; it reads ETYSRGRQKHRARRSTDKNSKWTR. 3 cysteine pairs are disulfide-bonded: cysteine 43/cysteine 57, cysteine 50/cysteine 61, and cysteine 56/cysteine 68.

This sequence belongs to the conotoxin O1 superfamily. In terms of tissue distribution, expressed by the venom duct.

The protein resides in the secreted. In Conus ebraeus (Hebrew cone), this protein is Conotoxin Eb6.20 (E1).